The primary structure comprises 473 residues: ATP synthase subunit beta (473 aa).

158-165 provides a ligand contact to ATP; it reads GGAGVGKT.

It belongs to the ATPase alpha/beta chains family. In terms of assembly, F-type ATPases have 2 components, CF(1) - the catalytic core - and CF(0) - the membrane proton channel. CF(1) has five subunits: alpha(3), beta(3), gamma(1), delta(1), epsilon(1). CF(0) has three main subunits: a(1), b(2) and c(9-12). The alpha and beta chains form an alternating ring which encloses part of the gamma chain. CF(1) is attached to CF(0) by a central stalk formed by the gamma and epsilon chains, while a peripheral stalk is formed by the delta and b chains. The F(1)F(0) complex interacts with SpoIIIJ and YqjG; YqgA is found in the same complex.

It is found in the cell membrane. It localises to the membrane raft. It catalyses the reaction ATP + H2O + 4 H(+)(in) = ADP + phosphate + 5 H(+)(out). Produces ATP from ADP in the presence of a proton gradient across the membrane. The catalytic sites are hosted primarily by the beta subunits. The protein is ATP synthase subunit beta of Bacillus subtilis (strain 168).